The sequence spans 147 residues: TRAP-T-associated universal stress protein TeaD (147 aa).

Residues 8–10, V38, 117–122, and 131–133 contribute to the ATP site; these read PVD, GAQGTN, and SVA.

The protein belongs to the universal stress protein A family. As to quaternary structure, homodimer or homotetramer; in equilibrium. The dimer/tetramer ratio is ATP-dependent. ATP stabilizes dimer-dimer complexes, with one ATP molecule bound to each monomer.

The protein resides in the cytoplasm. ATP-binding protein that negatively regulates activity of the tripartite ATP-independent periplasmic (TRAP) ectoine transport system TeaABC. May regulate uptake according to the ATP status of the cell. This chain is TRAP-T-associated universal stress protein TeaD (teaD), found in Halomonas elongata (strain ATCC 33173 / DSM 2581 / NBRC 15536 / NCIMB 2198 / 1H9).